A 737-amino-acid chain; its full sequence is Palmitoyltransferase akr1 (737 aa).

The interval 1 to 60 (MSSGDPPSGLQASGSNSSAALGLSPPSAPSGKSAATPPKVATDDASVELSSMKSERSPAK) is disordered. Residues 1–314 (MSSGDPPSGL…YVRDKAIMSK (314 aa)) are Cytoplasmic-facing. A compositionally biased stretch (low complexity) spans 7–38 (PSGLQASGSNSSAALGLSPPSAPSGKSAATPP). ANK repeat units follow at residues 97 to 126 (EGIT…DVNA), 131 to 160 (SVAT…DPLL), 164 to 193 (QGYN…PVDV), 197 to 226 (QGHT…NPNA), and 230 to 259 (GGLA…DRFA). 2 helical membrane passes run 315 to 335 (FFFF…SNMV) and 336 to 356 (VYFA…VAKK). The Cytoplasmic portion of the chain corresponds to 357-372 (AASQGPSEFRIIQKTP). Residues 373–393 (FLAGVFAGSLFWVFVRYVLYV) traverse the membrane as a helical segment. The Lumenal portion of the chain corresponds to 394 to 402 (LPATYSTNP). A helical membrane pass occupies residues 403 to 423 (FLNLGFVVFFSLTTYFYFYSM). At 424-500 (VADPGYVPKL…NCVGVNNLRQ (77 aa)) the chain is on the cytoplasmic side. Residues 456 to 506 (NFCVYCMIRRPLRSKHCRRCSRCVAKHDHHCPWIDNCVGVNNLRQFVLYIL) form the DHHC domain. The S-palmitoyl cysteine intermediate role is filled by C486. A helical membrane pass occupies residues 501–521 (FVLYILCLEIGIILFLHLTFN). Residues 522–549 (YINGLPAPAEPICNILNDQICSFVLRDT) are Lumenal-facing. A helical membrane pass occupies residues 550-570 (FTLLLDVWIAIQLVWVTMLGV). Over 571 to 737 (VQLVQVSRNQ…VAYDEAADIV (167 aa)) the chain is Cytoplasmic.

The protein belongs to the DHHC palmitoyltransferase family. AKR/ZDHHC17 subfamily.

Its subcellular location is the early endosome membrane. It is found in the golgi apparatus membrane. The enzyme catalyses L-cysteinyl-[protein] + hexadecanoyl-CoA = S-hexadecanoyl-L-cysteinyl-[protein] + CoA. Functionally, palmitoyltransferase specific for casein kinase 1. This is Palmitoyltransferase akr1 (akr1) from Emericella nidulans (strain FGSC A4 / ATCC 38163 / CBS 112.46 / NRRL 194 / M139) (Aspergillus nidulans).